A 550-amino-acid chain; its full sequence is Probable methionine--tRNA ligase, cytoplasmic (550 aa).

The short motif at 10–20 (PYVNNQPHLGN) is the 'HIGH' region element. Residues 328-332 (KFSKS) carry the 'KMSKS' region motif. Lys-331 contacts ATP.

The protein belongs to the class-I aminoacyl-tRNA synthetase family.

Its subcellular location is the cytoplasm. It carries out the reaction tRNA(Met) + L-methionine + ATP = L-methionyl-tRNA(Met) + AMP + diphosphate. The protein is Probable methionine--tRNA ligase, cytoplasmic of Encephalitozoon cuniculi (strain GB-M1) (Microsporidian parasite).